A 410-amino-acid polypeptide reads, in one-letter code: Cytochrome P450 105A3 (410 aa).

Cys-359 lines the heme pocket.

Belongs to the cytochrome P450 family. Monomer. Requires heme as cofactor.

Functionally, catalyzes the hydroxylation of sodium ML-236B carboxylate to pravastatin. In Streptomyces carbophilus, this protein is Cytochrome P450 105A3 (cyp105A3).